Consider the following 235-residue polypeptide: Large ribosomal subunit protein uL1 (235 aa).

This sequence belongs to the universal ribosomal protein uL1 family. In terms of assembly, part of the 50S ribosomal subunit.

In terms of biological role, binds directly to 23S rRNA. The L1 stalk is quite mobile in the ribosome, and is involved in E site tRNA release. Its function is as follows. Protein L1 is also a translational repressor protein, it controls the translation of the L11 operon by binding to its mRNA. The chain is Large ribosomal subunit protein uL1 from Synechococcus sp. (strain WH7803).